A 495-amino-acid polypeptide reads, in one-letter code: Protein YhjJ (495 aa).

The signal sequence occupies residues 1–24 (MQGTKIRLLAGSLLMLASAGYVQA).

This sequence belongs to the peptidase M16 family.

It localises to the periplasm. The chain is Protein YhjJ (yhjJ) from Salmonella typhimurium (strain LT2 / SGSC1412 / ATCC 700720).